A 362-amino-acid polypeptide reads, in one-letter code: MGFKCGIIGLPNVGKSTLFNLLTKGNSAVANFPFCTIKPNIGIVPVIDERINNLNQIVSPQKTVNAFIEFIDIAGLVKGASQGEGLGNQFLGNIRDVHAIAHVVRCFKDDNITHIYNQVQPIKDIDIINSELILSDFDLCEKTILKLQKKTLLKNKETQEKINTLKKCLNHLKQFFMLKTLNLNKTEKQLISYLRFLTLKPTMYIANINEEKESYYFLDKLNEIAKKEGSIVIPIHANLELDLVKMSDEEKKSFMKLFNIKTLGLNSIISSGYHLLNLITFFTVGDKEIRAWAIPNGSTSIEAAHKIHSDFSKGFIRAQIIKYVDFITYKSEAKIKEMGKFRTEGKQYYIQDGDIIHFLFNV.

In terms of domain architecture, OBG-type G spans Phe-3–Met-255. ATP is bound at residue Asn-12–Thr-17. The Mg(2+) site is built by Ser-16 and Thr-36. In terms of domain architecture, TGS spans Asn-277–Phe-360.

It belongs to the TRAFAC class OBG-HflX-like GTPase superfamily. OBG GTPase family. YchF/OLA1 subfamily. It depends on Mg(2+) as a cofactor.

ATPase that binds to both the 70S ribosome and the 50S ribosomal subunit in a nucleotide-independent manner. In Buchnera aphidicola subsp. Acyrthosiphon pisum (strain APS) (Acyrthosiphon pisum symbiotic bacterium), this protein is Ribosome-binding ATPase YchF.